Reading from the N-terminus, the 154-residue chain is MGLSDQEWQHVLTIWGKVESDLAGHGHEILMRLFHDLPETLDRFERFKGLTTPDQMKASEELKKHGVTVLTQLGKILKLKGKHEAELKPLAQTHATKHKIPVKYLEFISEVIIKVIAEKHSADFGADSQAAMKKALELFRNDMASKYKEFGFQG.

Residues 2–148 (GLSDQEWQHV…FRNDMASKYK (147 aa)) form the Globin domain. His-65 lines the nitrite pocket. His-65 contacts O2. A heme b-binding site is contributed by His-94.

In terms of assembly, monomeric.

It is found in the cytoplasm. The protein localises to the sarcoplasm. It catalyses the reaction Fe(III)-heme b-[protein] + nitric oxide + H2O = Fe(II)-heme b-[protein] + nitrite + 2 H(+). The catalysed reaction is H2O2 + AH2 = A + 2 H2O. Functionally, monomeric heme protein which primary function is to store oxygen and facilitate its diffusion within muscle tissues. Reversibly binds oxygen through a pentacoordinated heme iron and enables its timely and efficient release as needed during periods of heightened demand. Depending on the oxidative conditions of tissues and cells, and in addition to its ability to bind oxygen, it also has a nitrite reductase activity whereby it regulates the production of bioactive nitric oxide. Under stress conditions, like hypoxia and anoxia, it also protects cells against reactive oxygen species thanks to its pseudoperoxidase activity. In Dromaius novaehollandiae (Emu), this protein is Myoglobin.